The sequence spans 212 residues: Ropporin-1B (212 aa).

Positions 12–49 (PELPKMLKEFAKAAIRAQPQDLIQWGADYFEALSRGET) constitute an RIIa domain. Ser56 bears the Phosphoserine mark. Positions 209–212 (VWLE) are interaction with RHPN1.

Belongs to the ropporin family. Homodimer. Interacts with RHPN1. May interact with SPA17. Interacts with AKAP3. Interacts with FSCB; the interaction increases upon spermatozoa capacitation conditions. In terms of processing, sumoylated, sumoylation decreases upon spermatozoa capacitation conditions.

It is found in the cell projection. It localises to the cilium. Its subcellular location is the flagellum. Important for male fertility. With ROPN1L, involved in fibrous sheath integrity and sperm motility, plays a role in PKA-dependent signaling processes required for spermatozoa capacitation. This Homo sapiens (Human) protein is Ropporin-1B (ROPN1B).